A 334-amino-acid chain; its full sequence is MSLEAVTEPGKCSIDPNTKDLLASQHAGNNTPLQENSSAPRSECKAQDAMSKRQMKKFLKQKQWEDQRELRKQKRKEKRQKRKLERQAQAEHNIDANSRKRFRHEVQPSALRLIIDCSFDDLMALRDVKKLNKQIRRCYAENRRAVHPVQLYLTSHGGQLKSNMDEYDKGWINWKDIHIKPEHYKDLIKKEDLVYLTSDSPEVLSELDETKAYIIGGLVDHNHHKGITYKKALELGISHAQLPLGNFVKMNTRKVLAVNHVFEIILAFLEKKEWKEAFFSVLPQRKGAIPLTETGEQPECRASEQEDGEDSDSDSSIDESATIQPSVRCEEQNS.

Disordered stretches follow at residues 1–101 (MSLE…SRKR) and 290–334 (PLTE…EQNS). Polar residues predominate over residues 26-40 (HAGNNTPLQENSSAP). Positions 62–94 (KQWEDQRELRKQKRKEKRQKRKLERQAQAEHNI) form a coiled coil. Over residues 71–84 (RKQKRKEKRQKRKL) the composition is skewed to basic residues. The span at 85-98 (ERQAQAEHNIDANS) shows a compositional bias: basic and acidic residues. In terms of domain architecture, SAM-dependent MTase TRM10-type spans 98 to 289 (SRKRFRHEVQ…SVLPQRKGAI (192 aa)). The span at 305–317 (QEDGEDSDSDSSI) shows a compositional bias: acidic residues.

This sequence belongs to the class IV-like SAM-binding methyltransferase superfamily. TRM10 family.

It catalyses the reaction guanosine(9) in tRNA + S-adenosyl-L-methionine = N(1)-methylguanosine(9) in tRNA + S-adenosyl-L-homocysteine + H(+). S-adenosyl-L-methionine-dependent guanine N(1)-methyltransferase that catalyzes the formation of N(1)-methylguanine at position 9 (m1G9) in tRNAs. Probably not able to catalyze formation of N(1)-methyladenine at position 9 (m1A9) in tRNAs. This chain is tRNA methyltransferase 10 homolog A (trmt10a), found in Xenopus tropicalis (Western clawed frog).